Here is a 183-residue protein sequence, read N- to C-terminus: Protein Syd (183 aa).

The protein belongs to the Syd family.

The protein localises to the cell inner membrane. In terms of biological role, interacts with the SecY protein in vivo. May bind preferentially to an uncomplexed state of SecY, thus functioning either as a chelating agent for excess SecY in the cell or as a regulatory factor that negatively controls the translocase function. The polypeptide is Protein Syd (Yersinia pestis bv. Antiqua (strain Antiqua)).